A 254-amino-acid polypeptide reads, in one-letter code: Tubulin-specific chaperone B (254 aa).

One can recognise a CAP-Gly domain in the interval 182-225 (PLPLDVMGTWCGVEFPEAAGKNDGRINGVTLFGPVAPGHGSFVR). The interval 234–254 (KDEESAEVEDVHDDVESDDEI) is disordered. Residues 237-254 (ESAEVEDVHDDVESDDEI) show a composition bias toward acidic residues.

It belongs to the TBCB family. In terms of assembly, binds to monomeric alpha-tubulin.

The protein resides in the cytoplasm. It is found in the cytoskeleton. Acts to sequester alpha-tubulin from interaction with beta-tubulin, raising the possibility that it plays a regulatory role in the formation of the tubulin heterodimer. The sequence is that of Tubulin-specific chaperone B (ALF1) from Saccharomyces cerevisiae (strain ATCC 204508 / S288c) (Baker's yeast).